A 285-amino-acid polypeptide reads, in one-letter code: Small ribosomal subunit protein uS2 (285 aa).

The segment at 229–285 (AGLASGDAKPEAGAGEPLAEWEQELLAQANPNAEGSAEAAPAAATEEAPAAQTPADF) is disordered. Residues 257 to 285 (ANPNAEGSAEAAPAAATEEAPAAQTPADF) show a composition bias toward low complexity.

It belongs to the universal ribosomal protein uS2 family.

The polypeptide is Small ribosomal subunit protein uS2 (Nocardia farcinica (strain IFM 10152)).